The sequence spans 138 residues: Acidic phospholipase A2 PL1 (138 aa).

The first 16 residues, 1-16 (MRALWIVAVCLIGAEG), serve as a signal peptide directing secretion. Disulfide bonds link C42–C131, C44–C60, C59–C111, C65–C138, C66–C104, C73–C97, and C91–C102. Residues Y43, G45, and G47 each coordinate Ca(2+). Residue H63 is part of the active site. Residue D64 participates in Ca(2+) binding. Residue D105 is part of the active site.

Belongs to the phospholipase A2 family. Group II subfamily. D49 sub-subfamily. It depends on Ca(2+) as a cofactor. Expressed by the venom gland.

It localises to the secreted. It catalyses the reaction a 1,2-diacyl-sn-glycero-3-phosphocholine + H2O = a 1-acyl-sn-glycero-3-phosphocholine + a fatty acid + H(+). In terms of biological role, PLA2 catalyzes the calcium-dependent hydrolysis of the 2-acyl groups in 3-sn-phosphoglycerides. This chain is Acidic phospholipase A2 PL1, found in Vipera renardi (Steppe viper).